Consider the following 265-residue polypeptide: Pre-mRNA-splicing factor cwf15 (265 aa).

Disordered regions lie at residues 1-31 and 62-197; these read MTTA…ALPA and AAHF…ALEQ. Positions 113 to 125 are enriched in acidic residues; it reads EADEDASDSDDSV. Low complexity predominate over residues 143 to 155; the sequence is SNSQESVDSSNSE. Positions 155–205 form a coiled coil; the sequence is ESSDEESDSEDETQQLLRELENIKQERKREQMLQEEKNRALEQEKREREIA. The span at 156–167 shows a compositional bias: acidic residues; sequence SSDEESDSEDET. Residues 172–197 are compositionally biased toward basic and acidic residues; sequence RELENIKQERKREQMLQEEKNRALEQ.

It belongs to the CWC15 family. Belongs to the 40S cdc5-associated complex (or cwf complex), a spliceosome sub-complex reminiscent of a late-stage spliceosome composed of the U2, U5 and U6 snRNAs and at least brr2, cdc5, cwf2/prp3, cwf3/syf1, cwf4/syf3, cwf5/ecm2, spp42/cwf6, cwf7/spf27, cwf8, cwf9, cwf10, cwf11, cwf12, prp45/cwf13, cwf14, cwf15, cwf16, cwf17, cwf18, cwf19, cwf20, cwf21, cwf22, cwf23, cwf24, cwf25, cwf26, cyp7/cwf27, cwf28, cwf29/ist3, lea1, msl1, prp5/cwf1, prp10, prp12/sap130, prp17, prp22, sap61, sap62, sap114, sap145, slu7, smb1, smd1, smd3, smf1, smg1 and syf2.

The protein localises to the nucleus. Involved in pre-mRNA splicing. This Schizosaccharomyces pombe (strain 972 / ATCC 24843) (Fission yeast) protein is Pre-mRNA-splicing factor cwf15 (cwf15).